A 303-amino-acid polypeptide reads, in one-letter code: Glutaminase (303 aa).

Serine 61, asparagine 111, glutamate 155, asparagine 162, tyrosine 186, tyrosine 238, and valine 256 together coordinate substrate.

Belongs to the glutaminase family. Homotetramer.

It catalyses the reaction L-glutamine + H2O = L-glutamate + NH4(+). This chain is Glutaminase, found in Marinomonas sp. (strain MWYL1).